Reading from the N-terminus, the 610-residue chain is UvrABC system protein C (610 aa).

Positions 16–94 (SQPGVYRMYD…IKLYQPRYNV (79 aa)) constitute a GIY-YIG domain. A UVR domain is found at 204-239 (QQVLTRLIERMEQASQQLKFEDAARYRDQIQAVRQV).

The protein belongs to the UvrC family. In terms of assembly, interacts with UvrB in an incision complex.

It localises to the cytoplasm. Its function is as follows. The UvrABC repair system catalyzes the recognition and processing of DNA lesions. UvrC both incises the 5' and 3' sides of the lesion. The N-terminal half is responsible for the 3' incision and the C-terminal half is responsible for the 5' incision. In Photorhabdus laumondii subsp. laumondii (strain DSM 15139 / CIP 105565 / TT01) (Photorhabdus luminescens subsp. laumondii), this protein is UvrABC system protein C.